The following is a 206-amino-acid chain: Ribosomal RNA small subunit methyltransferase G (206 aa).

S-adenosyl-L-methionine is bound by residues Gly-71, Phe-76, 122–123 (AE), and Arg-135.

This sequence belongs to the methyltransferase superfamily. RNA methyltransferase RsmG family.

It is found in the cytoplasm. Its function is as follows. Specifically methylates the N7 position of a guanine in 16S rRNA. This chain is Ribosomal RNA small subunit methyltransferase G, found in Bacteroides thetaiotaomicron (strain ATCC 29148 / DSM 2079 / JCM 5827 / CCUG 10774 / NCTC 10582 / VPI-5482 / E50).